A 465-amino-acid polypeptide reads, in one-letter code: UDP-N-acetylmuramoylalanine--D-glutamate ligase (465 aa).

112 to 118 serves as a coordination point for ATP; the sequence is GTDGKTT.

It belongs to the MurCDEF family.

The protein resides in the cytoplasm. It carries out the reaction UDP-N-acetyl-alpha-D-muramoyl-L-alanine + D-glutamate + ATP = UDP-N-acetyl-alpha-D-muramoyl-L-alanyl-D-glutamate + ADP + phosphate + H(+). The protein operates within cell wall biogenesis; peptidoglycan biosynthesis. Functionally, cell wall formation. Catalyzes the addition of glutamate to the nucleotide precursor UDP-N-acetylmuramoyl-L-alanine (UMA). This Chlorobium limicola (strain DSM 245 / NBRC 103803 / 6330) protein is UDP-N-acetylmuramoylalanine--D-glutamate ligase.